A 292-amino-acid polypeptide reads, in one-letter code: Tetratricopeptide repeat protein 1 (292 aa).

The interval 20-125 (TDPQEAECLH…SSRLKEEGNE (106 aa)) is disordered. 2 stretches are compositionally biased toward basic and acidic residues: residues 36–49 (KEQH…KDVD) and 75–85 (GADKLENKPED). Acidic residues predominate over residues 86 to 98 (DMNPSELDEEYLM). Serine 90 carries the phosphoserine modification. A compositionally biased stretch (basic and acidic residues) spans 99–125 (ELEKNMPDEEKKRRREESSRLKEEGNE). TPR repeat units follow at residues 116–149 (SSRL…CPSC), 155–188 (SVLF…NPSY), and 189–222 (IRAI…DPSV).

In terms of assembly, interacts with the GAP domain of NF1. Interacts (via TPR repeats) with HSP90AA1 and HSPA8.

The sequence is that of Tetratricopeptide repeat protein 1 (TTC1) from Bos taurus (Bovine).